The primary structure comprises 56 residues: Bdellin B-3 (56 aa).

In terms of domain architecture, Kazal-like spans 1–42 (DTECVCTKELHRVCGSDGVTYDNECLATCHGASVAHDHACEG). Disulfide bonds link C4–C29, C6–C25, and C14–C40.

Proteinase inhibitor. Blocks the activity of trypsin, plasmin and sperm acrosin. This Hirudo medicinalis (Medicinal leech) protein is Bdellin B-3.